The primary structure comprises 291 residues: 4-hydroxy-tetrahydrodipicolinate synthase (291 aa).

Thr45 lines the pyruvate pocket. The active-site Proton donor/acceptor is the Tyr133. The active-site Schiff-base intermediate with substrate is Lys161. Ile203 is a pyruvate binding site.

Belongs to the DapA family. Homotetramer; dimer of dimers.

It is found in the cytoplasm. The catalysed reaction is L-aspartate 4-semialdehyde + pyruvate = (2S,4S)-4-hydroxy-2,3,4,5-tetrahydrodipicolinate + H2O + H(+). It participates in amino-acid biosynthesis; L-lysine biosynthesis via DAP pathway; (S)-tetrahydrodipicolinate from L-aspartate: step 3/4. In terms of biological role, catalyzes the condensation of (S)-aspartate-beta-semialdehyde [(S)-ASA] and pyruvate to 4-hydroxy-tetrahydrodipicolinate (HTPA). The protein is 4-hydroxy-tetrahydrodipicolinate synthase of Methylococcus capsulatus (strain ATCC 33009 / NCIMB 11132 / Bath).